The following is a 148-amino-acid chain: 3-hydroxyacyl-[acyl-carrier-protein] dehydratase FabZ (148 aa).

Residue H50 is part of the active site.

This sequence belongs to the thioester dehydratase family. FabZ subfamily.

The protein localises to the cytoplasm. The catalysed reaction is a (3R)-hydroxyacyl-[ACP] = a (2E)-enoyl-[ACP] + H2O. Its function is as follows. Involved in unsaturated fatty acids biosynthesis. Catalyzes the dehydration of short chain beta-hydroxyacyl-ACPs and long chain saturated and unsaturated beta-hydroxyacyl-ACPs. The sequence is that of 3-hydroxyacyl-[acyl-carrier-protein] dehydratase FabZ from Lactobacillus helveticus (strain DPC 4571).